A 38-amino-acid chain; its full sequence is Mu-hexatoxin-Mg1b (38 aa).

Cystine bridges form between cysteine 1–cysteine 15, cysteine 8–cysteine 20, and cysteine 14–cysteine 34. Position 38 is a serine amide (serine 38).

This sequence belongs to the neurotoxin 14 (magi-1) family. 09 (magi-1) subfamily. Expressed by the venom gland.

It is found in the secreted. Its function is as follows. Insecticidal neurotoxin. Shows competition for site 3 of insect voltage-gated sodium channels (Nav). This is Mu-hexatoxin-Mg1b from Macrothele gigas (Japanese funnel web spider).